The following is a 286-amino-acid chain: Transcription factor bHLH137 (286 aa).

A compositionally biased stretch (polar residues) spans 63 to 84 (SGSEKLANTTKTATTGSSSCDQ). The tract at residues 63-149 (SGSEKLANTT…RGQATDSHSL (87 aa)) is disordered. One can recognise a bHLH domain in the interval 142–192 (QATDSHSLAERVRREKISERMRTLQNLVPGCDKVTGKALMLDEIINYVQTL).

As to quaternary structure, homodimer.

It localises to the nucleus. This chain is Transcription factor bHLH137 (BHLH137), found in Arabidopsis thaliana (Mouse-ear cress).